The chain runs to 211 residues: Pyridoxine/pyridoxamine 5'-phosphate oxidase (211 aa).

Residues 7-10 (RREY) and Lys65 each bind substrate. Residues 60 to 65 (RTVLLK), 75 to 76 (YT), Arg81, Lys82, and Gln104 each bind FMN. Substrate contacts are provided by Tyr122, Arg126, and Ser130. Residues 139–140 (QS) and Trp184 each bind FMN. 190 to 192 (RLH) is a substrate binding site. Arg194 provides a ligand contact to FMN.

The protein belongs to the pyridoxamine 5'-phosphate oxidase family. In terms of assembly, homodimer. Requires FMN as cofactor.

It carries out the reaction pyridoxamine 5'-phosphate + O2 + H2O = pyridoxal 5'-phosphate + H2O2 + NH4(+). It catalyses the reaction pyridoxine 5'-phosphate + O2 = pyridoxal 5'-phosphate + H2O2. The protein operates within cofactor metabolism; pyridoxal 5'-phosphate salvage; pyridoxal 5'-phosphate from pyridoxamine 5'-phosphate: step 1/1. It functions in the pathway cofactor metabolism; pyridoxal 5'-phosphate salvage; pyridoxal 5'-phosphate from pyridoxine 5'-phosphate: step 1/1. In terms of biological role, catalyzes the oxidation of either pyridoxine 5'-phosphate (PNP) or pyridoxamine 5'-phosphate (PMP) into pyridoxal 5'-phosphate (PLP). The sequence is that of Pyridoxine/pyridoxamine 5'-phosphate oxidase from Aeromonas hydrophila subsp. hydrophila (strain ATCC 7966 / DSM 30187 / BCRC 13018 / CCUG 14551 / JCM 1027 / KCTC 2358 / NCIMB 9240 / NCTC 8049).